The chain runs to 644 residues: Large subunit GTPase 1 homolog (644 aa).

A disordered region spans residues 1-31 (MGRRRAPGGGSLGRVLIRQQTQRSRSHRHTD). Phosphoserine occurs at positions 93 and 97. Positions 164–430 (WRQLWRVIER…LCDCPGLVMP (267 aa)) constitute a CP-type G domain. 212–215 (NKAD) provides a ligand contact to GTP. The tract at residues 253-345 (KEEVDSVAGD…KNAENQQVNN (93 aa)) is disordered. Acidic residues predominate over residues 302–326 (CQEDEEEDWQTCSEEDSVPEEEEGC). Residues 379 to 386 (GYPNVGKS) and 423 to 426 (DCPG) contribute to the GTP site. The disordered stretch occupies residues 618 to 644 (VPGKPWKKHGNRNKKEKSRRLYKHLDV). Basic residues predominate over residues 622–644 (PWKKHGNRNKKEKSRRLYKHLDV).

The protein belongs to the TRAFAC class YlqF/YawG GTPase family. LSG1 subfamily.

It localises to the cytoplasm. Its subcellular location is the endoplasmic reticulum. The protein localises to the nucleus. It is found in the cajal body. It carries out the reaction GTP + H2O = GDP + phosphate + H(+). In terms of biological role, functions as a GTPase. May act by mediating the release of NMD3 from the 60S ribosomal subunit after export into the cytoplasm during the 60S ribosomal subunit maturation. This chain is Large subunit GTPase 1 homolog, found in Mus musculus (Mouse).